Here is a 463-residue protein sequence, read N- to C-terminus: MDQSNRYADLTLTEEKLVADGNHLLVAYRLKPAAGYGFLEVAAHVAAESSTGTNVEVSTTDDFTRGVDALVYEIDEAAFGDKGGLMKIAYPVDLFDPNLIDGHYNVSHMWSLILGNNQGMGDHEGLRMLDFLVPEKMVKRFDGPATDISDLWKVLGRPEVDGGYIAGTIIKPKLGLRPEPFAKACYDFWLGGDFIKNDEPQANQNFCPMEVVIPKVAEAMDRAQQATGQAKLFSANVTADFHEEMIKRGEYVLGEFAKYGNEKHVAFLVDGFVTGPAGVTTSRRAFPDTYLHFHRAGHGAVTSYKSPMGMDPLCYMKLARLMGASGIHTGTMGYGKMEGHNDERVLAYMLERDECQGPYFYQKWYGMKPTTPIISGGMDALRLPGFFENLGHGNVINTCGGGSFGHIDSPAAGGISLGQAYACWKTGAEPIEAPREFARAFESFPGDADKIFPGWREKLGVHK.

Position 116 (Asn116) interacts with substrate. Lys171 acts as the Proton acceptor in catalysis. Residue Lys173 participates in substrate binding. Mg(2+) contacts are provided by Lys196, Asp198, and Glu199. N6-carboxylysine is present on Lys196. Catalysis depends on His294, which acts as the Proton acceptor. 3 residues coordinate substrate: Arg295, His328, and Ser375.

The protein belongs to the RuBisCO large chain family. Type II subfamily. Homodimer. The cofactor is Mg(2+).

The enzyme catalyses 2 (2R)-3-phosphoglycerate + 2 H(+) = D-ribulose 1,5-bisphosphate + CO2 + H2O. It carries out the reaction D-ribulose 1,5-bisphosphate + O2 = 2-phosphoglycolate + (2R)-3-phosphoglycerate + 2 H(+). Its function is as follows. RuBisCO catalyzes two reactions: the carboxylation of D-ribulose 1,5-bisphosphate, the primary event in carbon dioxide fixation, as well as the oxidative fragmentation of the pentose substrate. Both reactions occur simultaneously and in competition at the same active site. The sequence is that of Ribulose bisphosphate carboxylase from Hydrogenovibrio marinus.